The chain runs to 795 residues: Phenylalanine--tRNA ligase beta subunit (795 aa).

The tRNA-binding domain occupies 39–148 (AGVFDGVKVG…ENAPIGMDFR (110 aa)). The region spanning 401 to 476 (PKPNQVALRR…RIYGYNNIPN (76 aa)) is the B5 domain. The Mg(2+) site is built by Asp-454, Asp-460, Glu-463, and Glu-464. Positions 701-794 (SKFPANRRDI…VSAQFGAALR (94 aa)) constitute an FDX-ACB domain.

It belongs to the phenylalanyl-tRNA synthetase beta subunit family. Type 1 subfamily. In terms of assembly, tetramer of two alpha and two beta subunits. The cofactor is Mg(2+).

Its subcellular location is the cytoplasm. The enzyme catalyses tRNA(Phe) + L-phenylalanine + ATP = L-phenylalanyl-tRNA(Phe) + AMP + diphosphate + H(+). This Vibrio cholerae serotype O1 (strain ATCC 39315 / El Tor Inaba N16961) protein is Phenylalanine--tRNA ligase beta subunit (pheT).